Here is a 648-residue protein sequence, read N- to C-terminus: Probable ATP-dependent RNA helicase DDX43 (648 aa).

A disordered region spans residues 1–60; that stretch reads MSHHGGAPKASTWVVASRRSSTVSRAPERRPAEELNRTGPEGYSVGRGGRWRGTSRPPEA. Over residues 10 to 25 the composition is skewed to low complexity; sequence ASTWVVASRRSSTVSR. The segment covering 26 to 36 has biased composition (basic and acidic residues); it reads APERRPAEELN. Residues 67 to 128 form the KH domain; the sequence is ELPLCFALKS…AMQTKAKAVI (62 aa). The Q motif signature appears at 242–270; the sequence is TFDDAFQCYPEVMENIKKAGFQKPTPIQS. One can recognise a Helicase ATP-binding domain in the interval 273 to 448; the sequence is WPIVLQGIDL…QSYLKEPMIV (176 aa). 286–293 lines the ATP pocket; sequence AQTGTGKT. The DEAD box motif lies at 396–399; the sequence is DEAD. A Helicase C-terminal domain is found at 460–621; sequence SVKQNIIVTT…SIPEELVSMA (162 aa). Basic and acidic residues predominate over residues 628-641; it reads QQKREMERKMERPQ. Positions 628 to 648 are disordered; sequence QQKREMERKMERPQGRPKKFH.

Belongs to the DEAD box helicase family. Expressed in testis. Expressed in many tumors of various histological types at a level that is 100-fold higher than the level observed in normal tissues except testis.

The enzyme catalyses ATP + H2O = ADP + phosphate + H(+). The protein is Probable ATP-dependent RNA helicase DDX43 (DDX43) of Homo sapiens (Human).